An 86-amino-acid polypeptide reads, in one-letter code: MANIKSQKKRILTNEKARLRNNSYKSELKTLIRKVDAAVESGNKDAAAETLRTASRKLDKAVSKGVLHKNTAANKKSGLAKKVAKI.

This sequence belongs to the bacterial ribosomal protein bS20 family.

Its function is as follows. Binds directly to 16S ribosomal RNA. The chain is Small ribosomal subunit protein bS20 from Kocuria rhizophila (strain ATCC 9341 / DSM 348 / NBRC 103217 / DC2201).